A 585-amino-acid polypeptide reads, in one-letter code: Testis-specific serine kinase substrate (585 aa).

Over residues 91–108 (EPDSSGTDSTTEDSGPLA) the composition is skewed to low complexity. A disordered region spans residues 91–125 (EPDSSGTDSTTEDSGPLALPGPPASPTTPWAPEDP). S224 is modified (phosphoserine). 2 disordered regions span residues 264–312 (HGLS…SEQE) and 559–585 (LEGSTGAMGGGSNGGAPPKRGSPGSEQ). Residue S281 is modified to Phosphoserine; by TSSK1 and TSSK2. S309 carries the phosphoserine modification.

Phosphorylated on serine residue(s) by STK22A/TSSK1 and STK22B/TSSK2. Testis specific.

The protein localises to the cytoplasm. The protein resides in the cytoskeleton. It is found in the microtubule organizing center. It localises to the centrosome. Its subcellular location is the centriole. The protein localises to the cytoplasmic vesicle. The protein resides in the secretory vesicle. It is found in the acrosome. Its function is as follows. May play a role in testicular physiology, most probably in the process of spermatogenesis or spermatid development. The protein is Testis-specific serine kinase substrate (Tsks) of Mus musculus (Mouse).